A 209-amino-acid polypeptide reads, in one-letter code: Uracil phosphoribosyltransferase (209 aa).

5-phospho-alpha-D-ribose 1-diphosphate is bound by residues R79, R104, and 131 to 139 (DPMLATGGS). Residues I194 and 199 to 201 (GDA) each bind uracil. Residue D200 coordinates 5-phospho-alpha-D-ribose 1-diphosphate.

It belongs to the UPRTase family. Mg(2+) is required as a cofactor.

It catalyses the reaction UMP + diphosphate = 5-phospho-alpha-D-ribose 1-diphosphate + uracil. The protein operates within pyrimidine metabolism; UMP biosynthesis via salvage pathway; UMP from uracil: step 1/1. With respect to regulation, allosterically activated by GTP. In terms of biological role, catalyzes the conversion of uracil and 5-phospho-alpha-D-ribose 1-diphosphate (PRPP) to UMP and diphosphate. The protein is Uracil phosphoribosyltransferase of Halalkalibacterium halodurans (strain ATCC BAA-125 / DSM 18197 / FERM 7344 / JCM 9153 / C-125) (Bacillus halodurans).